The chain runs to 382 residues: D-galactonate dehydratase (382 aa).

A Mg(2+)-binding site is contributed by Asp183. His185 (proton donor) is an active-site residue. The Mg(2+) site is built by Glu209 and Glu235. His285 (proton acceptor) is an active-site residue.

The protein belongs to the mandelate racemase/muconate lactonizing enzyme family. GalD subfamily. The cofactor is Mg(2+).

The enzyme catalyses D-galactonate = 2-dehydro-3-deoxy-D-galactonate + H2O. It functions in the pathway carbohydrate acid metabolism; D-galactonate degradation; D-glyceraldehyde 3-phosphate and pyruvate from D-galactonate: step 1/3. In terms of biological role, catalyzes the dehydration of D-galactonate to 2-keto-3-deoxy-D-galactonate. The polypeptide is D-galactonate dehydratase (Salmonella gallinarum (strain 287/91 / NCTC 13346)).